The following is a 431-amino-acid chain: Translation initiation factor 2 subunit gamma (431 aa).

The 198-residue stretch at 26–223 (QPCVNIGMVG…ALETQIPTPS (198 aa)) folds into the tr-type G domain. Positions 35–42 (GHVDHGKT) are G1. Mg(2+) contacts are provided by aspartate 38, threonine 42, glycine 63, and serine 65. Residue 38–43 (DHGKTT) coordinates GTP. Residues 63–67 (GISIR) form a G2 region. Zn(2+)-binding residues include cysteine 78, cysteine 81, cysteine 93, and cysteine 96. The G3 stretch occupies residues 110 to 113 (DAPG). Residues 166 to 169 (NKID) and 201 to 203 (SAQ) contribute to the GTP site. The tract at residues 166 to 169 (NKID) is G4. Residues 201–203 (SAQ) form a G5 region.

The protein belongs to the TRAFAC class translation factor GTPase superfamily. Classic translation factor GTPase family. EIF2G subfamily. As to quaternary structure, heterotrimer composed of an alpha, a beta and a gamma chain. Requires Mg(2+) as cofactor.

It catalyses the reaction GTP + H2O = GDP + phosphate + H(+). Its function is as follows. eIF-2 functions in the early steps of protein synthesis by forming a ternary complex with GTP and initiator tRNA. The polypeptide is Translation initiation factor 2 subunit gamma (Methanosarcina mazei (strain ATCC BAA-159 / DSM 3647 / Goe1 / Go1 / JCM 11833 / OCM 88) (Methanosarcina frisia)).